An 899-amino-acid chain; its full sequence is Solute carrier family 12 member 9 (899 aa).

Topologically, residues 1-42 (MANEHSPLLVHGVYSMMGNAEDSRGGSAGTGEASNPKTDPRK) are cytoplasmic. Residues 43-63 (LNTFFGVMVPTILSMFSIVLF) traverse the membrane as a helical segment. Topologically, residues 64–78 (LRTGFVVGHAGLLHG) are extracellular. A helical transmembrane segment spans residues 79–99 (LLMLFVAYFIISLTILSICAI). Residues 100–125 (STNGAVEGGGAYFMISRSLGPEFGGS) are Cytoplasmic-facing. A helical transmembrane segment spans residues 126 to 146 (IGLMFYLAKVCACGVYVLGLV). Topologically, residues 147–175 (EAIMDVFGQDPGSSVAQGLRVLPQGYWYT) are extracellular. The chain crosses the membrane as a helical span at residues 176-196 (VLYSSVVLLLCMLVCLVGAHI). Residues 197–201 (YAKAS) are Cytoplasmic-facing. The chain crosses the membrane as a helical span at residues 202 to 222 (FLILLVVTVSLISIIISPLIV). Residues 223 to 269 (SPQGFNITHTYGNNHSVTVSPSYTGFNSTTLKNNLGPRYSLDYSTNT) are Extracellular-facing. Residues asparagine 228, asparagine 236, and asparagine 249 are each glycosylated (N-linked (GlcNAc...) asparagine). A helical transmembrane segment spans residues 270-290 (MMSFATVFAVMFTSCTGIMAG). The Cytoplasmic segment spans residues 291–306 (ANMSGELKNPSESIPK). The chain crosses the membrane as a helical span at residues 307-327 (GTIMAVAYTFTVYVLLYLLLS). Topologically, residues 328–350 (STCDRSLLLNDYAVFQRVNVWPP) are extracellular. A helical transmembrane segment spans residues 351 to 371 (FVTIGVYCASLSAAMCSMIGA). Residues 372-373 (SR) lie on the Cytoplasmic side of the membrane. A helical membrane pass occupies residues 374–394 (ILHALALDQLFGLPLAPAAVT). Residues 395 to 399 (SSSGN) lie on the Extracellular side of the membrane. Residues 400–420 (PWVSVLYTWALVQCTLFAGQL) form a helical membrane-spanning segment. Asparagine 421 is a topological domain (cytoplasmic). A helical membrane pass occupies residues 422 to 442 (VIAGIVTVFYLLAYAAVDLAC). At 443–455 (LALEWASAPNFRP) the chain is on the extracellular side. A helical membrane pass occupies residues 456–476 (TFQFFSWHTCLLGIISCVVMM). Topologically, residues 477–487 (FVINPVYSSAS) are extracellular. A helical transmembrane segment spans residues 488–510 (IVLLLLLLLFLHYRSPTSSWGYI). Residues 511–563 (SQALIFHQVRKYLLMLDSRKDHVKFWRPQVLLMVSNPRSSCQLICFVNQLKKG) are Cytoplasmic-facing. Residues 564 to 584 (GLFVLGHVQIGDLDVLPADPV) form a helical membrane-spanning segment. Over 585–749 (QPQYNFWLSL…NLLTPGSASY (165 aa)) the chain is Extracellular. Residues 750 to 770 (ADVGSLFLLQMACVLNMASGW) traverse the membrane as a helical segment. Residues 771-899 (RRARLRIFVC…GVTPVTCTEL (129 aa)) are Cytoplasmic-facing.

This sequence belongs to the SLC12A transporter family.

Its subcellular location is the cell membrane. The protein localises to the lysosome membrane. Seems to correspond to a subunit of a multimeric transport system and thus, additional subunits may be required for its function. May play a role in lysosomal ion flux and osmoregulation. The sequence is that of Solute carrier family 12 member 9 (slc12a9) from Danio rerio (Zebrafish).